We begin with the raw amino-acid sequence, 130 residues long: Large ribosomal subunit protein bL12 (130 aa).

This sequence belongs to the bacterial ribosomal protein bL12 family. In terms of assembly, homodimer. Part of the ribosomal stalk of the 50S ribosomal subunit. Forms a multimeric L10(L12)X complex, where L10 forms an elongated spine to which 2 to 4 L12 dimers bind in a sequential fashion. Binds GTP-bound translation factors.

Forms part of the ribosomal stalk which helps the ribosome interact with GTP-bound translation factors. Is thus essential for accurate translation. The chain is Large ribosomal subunit protein bL12 from Chlamydia muridarum (strain MoPn / Nigg).